The chain runs to 1225 residues: DNA-directed RNA polymerase subunit beta' (1225 aa).

Residues cysteine 60, cysteine 62, cysteine 75, and cysteine 78 each contribute to the Zn(2+) site. Mg(2+) is bound by residues aspartate 450, aspartate 452, and aspartate 454. Residues cysteine 818, cysteine 892, cysteine 899, and cysteine 902 each contribute to the Zn(2+) site.

This sequence belongs to the RNA polymerase beta' chain family. As to quaternary structure, the RNAP catalytic core consists of 2 alpha, 1 beta, 1 beta' and 1 omega subunit. When a sigma factor is associated with the core the holoenzyme is formed, which can initiate transcription. Mg(2+) is required as a cofactor. Requires Zn(2+) as cofactor.

The enzyme catalyses RNA(n) + a ribonucleoside 5'-triphosphate = RNA(n+1) + diphosphate. Functionally, DNA-dependent RNA polymerase catalyzes the transcription of DNA into RNA using the four ribonucleoside triphosphates as substrates. This chain is DNA-directed RNA polymerase subunit beta', found in Streptococcus pneumoniae (strain ATCC BAA-255 / R6).